A 353-amino-acid chain; its full sequence is MSIEDLARANVRALTPYQSARRLGGKGDVWLNANEFPTAVAFQLTEQTLNRYPEPQPKAVIESYARYAEVKPEQVLVSRGADEGIELLIRAFCEPGEDAVLYCPPTYGMYSVSAETIGVECRTVPTLADWQLDLPGIEARLDGVKVVFVCSPNNPTGQIIDPQSMRDLLEMTRGKAIVVADEAYIEFCPQATLAGWLSDYPHLVVLRTLSKAFALAGLRCGFTLANAEVINVLLKVIAPYPLSTPVADIAAQALSPEGIAAMRQRVAQILDERRYLVEQLRGIACVEQVFDSETNYVLARITASSAVFKSLWDQGIILRDQNKQPSLSGCLRITIGTRAESQRVIDALTAENV.

Lys211 is modified (N6-(pyridoxal phosphate)lysine).

It belongs to the class-II pyridoxal-phosphate-dependent aminotransferase family. Histidinol-phosphate aminotransferase subfamily. Homodimer. The cofactor is pyridoxal 5'-phosphate.

The enzyme catalyses L-histidinol phosphate + 2-oxoglutarate = 3-(imidazol-4-yl)-2-oxopropyl phosphate + L-glutamate. The protein operates within amino-acid biosynthesis; L-histidine biosynthesis; L-histidine from 5-phospho-alpha-D-ribose 1-diphosphate: step 7/9. This is Histidinol-phosphate aminotransferase from Klebsiella pneumoniae subsp. pneumoniae (strain ATCC 700721 / MGH 78578).